The sequence spans 631 residues: Alpha-dioxygenase 2 (631 aa).

Positions 1–20 (MGFSPSSSWFLHPQLHHVVS) are cleaved as a signal peptide. His157 contacts heme b. Tyr378 (proton acceptor) is an active-site residue. His381 lines the heme b pocket. An N-linked (GlcNAc...) asparagine glycan is attached at Asn583.

Belongs to the peroxidase family. The cofactor is heme b. Expressed in seedlings (cotyledons, young leaves, and hypocotyls), flowers, siliques and old leaves.

Its function is as follows. Alpha-dioxygenase that catalyzes the primary oxygenation of fatty acids into oxylipins. May be involved in the senescence process. The sequence is that of Alpha-dioxygenase 2 (DOX2) from Arabidopsis thaliana (Mouse-ear cress).